We begin with the raw amino-acid sequence, 125 residues long: Desulfoferrodoxin homolog (125 aa).

Residues C10, C13, C29, C30, H49, H69, H75, C116, and H119 each contribute to the Fe cation site.

The protein belongs to the desulfoferrodoxin family. It depends on Fe(3+) as a cofactor. Cu(2+) is required as a cofactor.

In Archaeoglobus fulgidus (strain ATCC 49558 / DSM 4304 / JCM 9628 / NBRC 100126 / VC-16), this protein is Desulfoferrodoxin homolog.